Here is a 265-residue protein sequence, read N- to C-terminus: Putative N(omega)-hydroxy-L-arginine synthase DcsA (265 aa).

It belongs to the DcsA family. Requires heme as cofactor.

Its function is as follows. Involved in the biosynthesis of the antibiotic D-cycloserine (DCS), a cyclic structural analog of D-alanine, used as an antitubercular agent. Could catalyze the production of N(omega)-hydroxy-L-arginine (NHA) from L-arginine. This Streptomyces lavendulae protein is Putative N(omega)-hydroxy-L-arginine synthase DcsA.